The sequence spans 105 residues: Small ribosomal subunit protein uS10 (105 aa).

This sequence belongs to the universal ribosomal protein uS10 family. In terms of assembly, part of the 30S ribosomal subunit.

Functionally, involved in the binding of tRNA to the ribosomes. The chain is Small ribosomal subunit protein uS10 from Desulfotalea psychrophila (strain LSv54 / DSM 12343).